The sequence spans 314 residues: uncharacterized protein (314 aa).

An N-terminal signal peptide occupies residues 1–20 (MKKRAGIWAALLLAAVMLAG). A lipid anchor (N-palmitoyl cysteine) is attached at C21. The S-diacylglycerol cysteine moiety is linked to residue C21. Positions 59-311 (KIVSLMPSNT…ELAESIYPDT (253 aa)) constitute a Fe/B12 periplasmic-binding domain.

Belongs to the bacterial solute-binding protein 8 family. In terms of assembly, the complex is composed of two ATP-binding proteins (YvrA), two transmembrane proteins (YvrB) and a solute-binding protein (YvrC).

It is found in the cell membrane. Probably part of an ABC transporter complex. This is an uncharacterized protein from Bacillus subtilis (strain 168).